The sequence spans 230 residues: Type II restriction enzyme SinI (230 aa).

The enzyme catalyses Endonucleolytic cleavage of DNA to give specific double-stranded fragments with terminal 5'-phosphates.. Its function is as follows. A P subtype restriction enzyme that recognizes the double-stranded sequence 5'-GGWCC-3' and cleaves after G-1. The sequence is that of Type II restriction enzyme SinI (sinIR) from Salmonella infantis.